The following is a 600-amino-acid chain: MPEIRVTPLGAGQDVGRSCILVSISGKNVMLDCGMHMGYNDDRRFPDFSYITQSGRLTDFLDCVIISHFHLDHCGALPYFSEMVGYDGPIYMTHPTQAICPILLEDYRKIAVDKKGEANFFTSQMIKDCMKKVVAVHLHQTVQVDDELEIKAYYAGHVLGAAMFQIKVGSESVVYTGDYNMTPDRHLGAAWIDKCRPNLLITESTYATTIRDSKRCRERDFLKKVHETVERGGKVLIPVFALGRAQELCILLETFWERMNLKVPIYFSTGLTEKANHYYKLFITWTNQKIRKTFVQRNMFEFKHIKAFDRTFADNPGPMVVFATPGMLHAGQSLQIFRKWAGNEKNMVIMPGYCVQGTVGHKILSGQRKLEMEGRQMLEVKMQVEYMSFSAHADAKGIMQLVGQAEPESVLLVHGEAKKMEFLRQKIEQEFRVSCYMPANGETVTLPTSPSIPVGISLGLLKREMVQGLLPEAKKPRLLHGTLIMKDNNFRLVSSEQALKELGLAEHQLRFTCRVHLQDTRKEQETALRVYSHLKSTLKDHCVQHLPDGSVTVESILIQAAAHSEDPGTKVLLVSWTYQDEELGSFLTALLKNGLPQAPS.

Positions 68, 70, 72, 73, 157, and 178 each coordinate Zn(2+). The HXHXDH motif motif lies at 68 to 73; it reads HFHLDH. The active site involves Glu-203. Lys-381 is covalently cross-linked (Glycyl lysine isopeptide (Lys-Gly) (interchain with G-Cter in SUMO)). His-414 contacts Zn(2+). Glycyl lysine isopeptide (Lys-Gly) (interchain with G-Cter in SUMO) cross-links involve residues Lys-462 and Lys-475. Residues 469-479 carry the Nuclear localization signal motif; it reads LLPEAKKPRLL.

The protein belongs to the metallo-beta-lactamase superfamily. RNA-metabolizing metallo-beta-lactamase-like family. INTS11 subfamily. Component of the Integrator complex, composed of core subunits INTS1, INTS2, INTS3, INTS4, INTS5, INTS6, INTS7, INTS8, INTS9/RC74, INTS10, INTS11/CPSF3L, INTS12, INTS13, INTS14 and INTS15. The core complex associates with protein phosphatase 2A subunits PPP2CA and PPP2R1A, to form the Integrator-PP2A (INTAC) complex. INTS11 is part of the RNA endonuclease subcomplex, composed of INTS4, INTS9, INTS11 and inositol hexakisphosphate (InsP6). Interacts with WDR73; interaction is required for the assembly of the RNA endonuclease subcomplex in the cytoplasm. Interacts with BRAT1; interaction is required for the assembly of the RNA endonuclease subcomplex and inhibits the endonuclease activity of INTS11 before formation of mature integrator complex. Zn(2+) is required as a cofactor. Post-translationally, sumoylated; sumoylation regulates its subcellular location and is required for integrator complex integrity.

Its subcellular location is the nucleus. The protein localises to the cytoplasm. The RNA endonuclease activity is inhibited by BRAT1 that forms hyrogen bond and hydrophobic interactions with the active site. Functionally, RNA endonuclease component of the integrator complex, a multiprotein complex that terminates RNA polymerase II (Pol II) transcription in the promoter-proximal region of genes. The integrator complex provides a quality checkpoint during transcription elongation by driving premature transcription termination of transcripts that are unfavorably configured for transcriptional elongation: the complex terminates transcription by (1) catalyzing dephosphorylation of the C-terminal domain (CTD) of Pol II subunit POLR2A/RPB1 and SUPT5H/SPT5, (2) degrading the exiting nascent RNA transcript via endonuclease activity and (3) promoting the release of Pol II from bound DNA. The integrator complex is also involved in terminating the synthesis of non-coding Pol II transcripts, such as enhancer RNAs (eRNAs), small nuclear RNAs (snRNAs), telomerase RNAs and long non-coding RNAs (lncRNAs). Within the integrator complex, INTS11 constitutes the RNA endonuclease subunit that degrades exiting nascent RNA transcripts. Mediates recruitment of cytoplasmic dynein to the nuclear envelope, probably as component of the integrator complex. This chain is Integrator complex subunit 11 (Ints11), found in Rattus norvegicus (Rat).